Reading from the N-terminus, the 224-residue chain is Cytidylate kinase (224 aa).

11 to 19 (GPAAAGKST) contacts ATP.

This sequence belongs to the cytidylate kinase family. Type 1 subfamily.

It localises to the cytoplasm. It carries out the reaction CMP + ATP = CDP + ADP. The enzyme catalyses dCMP + ATP = dCDP + ADP. This Bacillus velezensis (strain DSM 23117 / BGSC 10A6 / LMG 26770 / FZB42) (Bacillus amyloliquefaciens subsp. plantarum) protein is Cytidylate kinase.